A 307-amino-acid chain; its full sequence is MGASTTARLGPARVRSERRSCAAERHRLVDLYRYERRLARLGLEPVAGVDEAGRGACAGPLVVAAVILGSDRRNRIAGLADSKQLTPAARESIYNEIISRALAWSVVVIPSSEVDELGVHAANITGMRRAVAGLAVRPAYVLTDGFSIAGLNAPGLAVCKGDEAVACIAAASVVAKVTRDRLMVELHEKFPMYEFATHKGYVTAGHRAALARHGPCPEHRRSFVTVRRAGGRMELRITELADSDDSPGFASGPAEAVPGPAGSAGAASAAARPAAAGPAGRLVDQNRAADLRDNGDVSRPAELLEIP.

One can recognise an RNase H type-2 domain in the interval 44-235 (EPVAGVDEAG…VRRAGGRMEL (192 aa)). A divalent metal cation contacts are provided by D50, E51, and D144. Positions 241 to 307 (ADSDDSPGFA…SRPAELLEIP (67 aa)) are disordered. Positions 250 to 280 (ASGPAEAVPGPAGSAGAASAAARPAAAGPAG) are enriched in low complexity. Basic and acidic residues predominate over residues 287–296 (RAADLRDNGD).

It belongs to the RNase HII family. Mn(2+) is required as a cofactor. It depends on Mg(2+) as a cofactor.

It is found in the cytoplasm. It catalyses the reaction Endonucleolytic cleavage to 5'-phosphomonoester.. Its function is as follows. Endonuclease that specifically degrades the RNA of RNA-DNA hybrids. The sequence is that of Ribonuclease HII from Acidothermus cellulolyticus (strain ATCC 43068 / DSM 8971 / 11B).